A 218-amino-acid polypeptide reads, in one-letter code: MGWEFFSLETLQELARQYGYGAVFFGIALENAGIPIPGETITLLGGFLAGSGDLSYGGVLIAAIAGAVLGDSCGYWVGRWGGWPLLTRAAQLFNIPQEKLDQARHKFSQNGAAAVFFGRFVTLLRIFAGPMAGIVRMPYGKFLLYNIGGASVWAAITVSLAYFLGRVVTIEQIIAWTTQFSWFALAAVVGMVGIYFVFHFLQKRFDQTIESTIGDRPQ.

Helical transmembrane passes span 27–49 (IALE…GFLA), 57–77 (GGVL…GYWV), 115–135 (VFFG…AGIV), 142–162 (FLLY…SLAY), and 180–200 (FSWF…VFHF).

This sequence belongs to the DedA family.

It localises to the cell membrane. This is an uncharacterized protein from Synechocystis sp. (strain ATCC 27184 / PCC 6803 / Kazusa).